Here is a 332-residue protein sequence, read N- to C-terminus: Beta-ketoacyl-[acyl-carrier-protein] synthase III (332 aa).

Catalysis depends on residues Cys116 and His255. The ACP-binding stretch occupies residues 256 to 260; that stretch reads QANLR. The active site involves Asn285.

It belongs to the thiolase-like superfamily. FabH family. Homodimer.

It localises to the cytoplasm. The enzyme catalyses malonyl-[ACP] + acetyl-CoA + H(+) = 3-oxobutanoyl-[ACP] + CO2 + CoA. Its pathway is lipid metabolism; fatty acid biosynthesis. Catalyzes the condensation reaction of fatty acid synthesis by the addition to an acyl acceptor of two carbons from malonyl-ACP. Catalyzes the first condensation reaction which initiates fatty acid synthesis and may therefore play a role in governing the total rate of fatty acid production. Possesses both acetoacetyl-ACP synthase and acetyl transacylase activities. Its substrate specificity determines the biosynthesis of branched-chain and/or straight-chain of fatty acids. This is Beta-ketoacyl-[acyl-carrier-protein] synthase III from Helicobacter hepaticus (strain ATCC 51449 / 3B1).